A 309-amino-acid chain; its full sequence is Phosphoserine phosphatase (309 aa).

Asp97 functions as the Nucleophile in the catalytic mechanism. Residues Asp97 and Asp99 each coordinate Mg(2+). Asp99 serves as the catalytic Proton donor. Substrate-binding positions include Glu106, Arg142, 186-187, and Lys232; that span reads SG. Asp255 serves as a coordination point for Mg(2+). Asn258 lines the substrate pocket.

The protein belongs to the HAD-like hydrolase superfamily. SerB family. Requires Mg(2+) as cofactor.

It catalyses the reaction O-phospho-L-serine + H2O = L-serine + phosphate. The catalysed reaction is O-phospho-D-serine + H2O = D-serine + phosphate. It functions in the pathway amino-acid biosynthesis; L-serine biosynthesis; L-serine from 3-phospho-D-glycerate: step 3/3. This is Phosphoserine phosphatase (SER2) from Saccharomyces cerevisiae (strain ATCC 204508 / S288c) (Baker's yeast).